We begin with the raw amino-acid sequence, 264 residues long: S-adenosylmethionine decarboxylase proenzyme (264 aa).

The active-site Schiff-base intermediate with substrate; via pyruvic acid is the serine 113. Position 113 is a pyruvic acid (Ser); by autocatalysis (serine 113). Histidine 118 (proton acceptor; for processing activity) is an active-site residue. The active-site Proton donor; for catalytic activity is the cysteine 141.

This sequence belongs to the prokaryotic AdoMetDC family. Type 2 subfamily. Heterooctamer of four alpha and four beta chains arranged as a tetramer of alpha/beta heterodimers. The cofactor is pyruvate. Is synthesized initially as an inactive proenzyme. Formation of the active enzyme involves a self-maturation process in which the active site pyruvoyl group is generated from an internal serine residue via an autocatalytic post-translational modification. Two non-identical subunits are generated from the proenzyme in this reaction, and the pyruvate is formed at the N-terminus of the alpha chain, which is derived from the carboxyl end of the proenzyme. The post-translation cleavage follows an unusual pathway, termed non-hydrolytic serinolysis, in which the side chain hydroxyl group of the serine supplies its oxygen atom to form the C-terminus of the beta chain, while the remainder of the serine residue undergoes an oxidative deamination to produce ammonia and the pyruvoyl group blocking the N-terminus of the alpha chain.

The enzyme catalyses S-adenosyl-L-methionine + H(+) = S-adenosyl 3-(methylsulfanyl)propylamine + CO2. Its pathway is amine and polyamine biosynthesis; S-adenosylmethioninamine biosynthesis; S-adenosylmethioninamine from S-adenosyl-L-methionine: step 1/1. In terms of biological role, catalyzes the decarboxylation of S-adenosylmethionine to S-adenosylmethioninamine (dcAdoMet), the propylamine donor required for the synthesis of the polyamines spermine and spermidine from the diamine putrescine. The chain is S-adenosylmethionine decarboxylase proenzyme from Xanthomonas oryzae pv. oryzae (strain MAFF 311018).